The following is a 502-amino-acid chain: Lysine--tRNA ligase (502 aa).

Mg(2+)-binding residues include E411 and E418.

It belongs to the class-II aminoacyl-tRNA synthetase family. In terms of assembly, homodimer. Mg(2+) serves as cofactor.

It is found in the cytoplasm. The catalysed reaction is tRNA(Lys) + L-lysine + ATP = L-lysyl-tRNA(Lys) + AMP + diphosphate. In Chromohalobacter salexigens (strain ATCC BAA-138 / DSM 3043 / CIP 106854 / NCIMB 13768 / 1H11), this protein is Lysine--tRNA ligase.